Here is a 256-residue protein sequence, read N- to C-terminus: Small ribosomal subunit protein uS2 (256 aa).

It belongs to the universal ribosomal protein uS2 family.

The chain is Small ribosomal subunit protein uS2 from Geotalea uraniireducens (strain Rf4) (Geobacter uraniireducens).